Here is a 388-residue protein sequence, read N- to C-terminus: Putrescine N-methyltransferase 1 (388 aa).

Polar residues-rich tracts occupy residues 1 to 14 (MEVISTNTNGSTIF), 23 to 39 (GYQNGTSKHQNGHQNGT), and 46 to 88 (HQNG…GNEL). The disordered stretch occupies residues 1–88 (MEVISTNTNG…TISHDNGNEL (88 aa)). The region spanning 99–336 (PGWFSEFSAL…GVIGYMLCST (238 aa)) is the PABS domain. S-adenosyl-L-methionine-binding positions include glutamine 130, glutamate 205, and 236-237 (DG). Aspartate 255 (proton acceptor) is an active-site residue. Tyrosine 324 is a binding site for S-adenosyl-L-methionine.

It belongs to the class I-like SAM-binding methyltransferase superfamily. Spermidine/spermine synthase family. As to expression, mainly expressed in roots.

It carries out the reaction putrescine + S-adenosyl-L-methionine = N-methylputrescine + S-adenosyl-L-homocysteine + H(+). It participates in alkaloid biosynthesis; nicotine biosynthesis. In terms of biological role, involved in the biosynthesis of pyridine alkaloid natural products, leading mainly to the production of anabasine, anatabine, nicotine and nornicotine, effective deterrents against herbivores with antiparasitic and pesticide properties (neurotoxins); nornicotine serves as the precursor in the synthesis of the carcinogen compound N'-nitrosonornicotine (NNN). Methyltransferase that mediates the conversion of putrescine to N-methylputrescine. The sequence is that of Putrescine N-methyltransferase 1 from Nicotiana attenuata (Coyote tobacco).